Reading from the N-terminus, the 329-residue chain is RING finger protein 225 (329 aa).

Residues 1–55 (MPCPRPFWLRHSRAPQGSGPSSPGSLSAPRSPSRGEDQEEEEEEEGDGSPGSGPI) are disordered. The span at 14-32 (APQGSGPSSPGSLSAPRSP) shows a compositional bias: low complexity. A compositionally biased stretch (acidic residues) spans 37 to 47 (DQEEEEEEEGD). An RING-type zinc finger spans residues 64–112 (CLICVSSFDGVFKLPKRLDCGHVFCLECLARLSLATAGGGNAVACPVCR). The interval 122 to 181 (GLPALPTQSGLLPRDARAPPSRQGSVRFDRRRGLLYLRPPPPPPGPRKARAPPPPPPLRL) is disordered. Residues 159–179 (RPPPPPPGPRKARAPPPPPPL) are compositionally biased toward pro residues. A helical membrane pass occupies residues 203–223 (ALAVLVAAGLVVSGVYIFFLI). A disordered region spans residues 248 to 329 (FPPRPPPGSP…RGARRLWGSQ (82 aa)). Over residues 281-293 (DALEPEAGPEDPA) the composition is skewed to acidic residues. A compositionally biased stretch (basic and acidic residues) spans 294-304 (EAERTLDRRSD).

It is found in the membrane. The sequence is that of RING finger protein 225 from Homo sapiens (Human).